Here is a 342-residue protein sequence, read N- to C-terminus: Ketol-acid reductoisomerase (NADP(+)) (342 aa).

The KARI N-terminal Rossmann domain occupies 2-182 (AKIYYDDDAD…GGLRAGGIET (181 aa)). NADP(+)-binding positions include 25-28 (YGSQ), Arg48, Ser51, Ser53, and 83-86 (DQNQ). His108 is a catalytic residue. Gly134 lines the NADP(+) pocket. Residues 183-328 (SFREETETDL…KELRKMYSWL (146 aa)) enclose the KARI C-terminal knotted domain. Asp191, Glu195, Glu227, and Glu231 together coordinate Mg(2+). Ser252 is a binding site for substrate.

The protein belongs to the ketol-acid reductoisomerase family. Requires Mg(2+) as cofactor.

It catalyses the reaction (2R)-2,3-dihydroxy-3-methylbutanoate + NADP(+) = (2S)-2-acetolactate + NADPH + H(+). It carries out the reaction (2R,3R)-2,3-dihydroxy-3-methylpentanoate + NADP(+) = (S)-2-ethyl-2-hydroxy-3-oxobutanoate + NADPH + H(+). Its pathway is amino-acid biosynthesis; L-isoleucine biosynthesis; L-isoleucine from 2-oxobutanoate: step 2/4. The protein operates within amino-acid biosynthesis; L-valine biosynthesis; L-valine from pyruvate: step 2/4. Its function is as follows. Involved in the biosynthesis of branched-chain amino acids (BCAA). Catalyzes an alkyl-migration followed by a ketol-acid reduction of (S)-2-acetolactate (S2AL) to yield (R)-2,3-dihydroxy-isovalerate. In the isomerase reaction, S2AL is rearranged via a Mg-dependent methyl migration to produce 3-hydroxy-3-methyl-2-ketobutyrate (HMKB). In the reductase reaction, this 2-ketoacid undergoes a metal-dependent reduction by NADPH to yield (R)-2,3-dihydroxy-isovalerate. The sequence is that of Ketol-acid reductoisomerase (NADP(+)) from Cutibacterium acnes (strain DSM 16379 / KPA171202) (Propionibacterium acnes).